Here is a 1503-residue protein sequence, read N- to C-terminus: Lysine-specific demethylase 5B-B (1503 aa).

Residues Cys-15–Pro-56 enclose the JmjN domain. The region spanning Thr-80 to Ser-170 is the ARID domain. A compositionally biased stretch (polar residues) spans Val-202–Ala-211. Disordered regions lie at residues Val-202–Ser-223 and Ile-268–Pro-287. Basic and acidic residues predominate over residues Ile-268 to Ser-278. A PHD-type 1 zinc finger spans residues Leu-295–Gln-345. Residues Lys-439–Arg-605 form the JmjC domain. Positions 485, 488, and 573 each coordinate Fe cation. The PHD-type 2 zinc-finger motif lies at Leu-1168–Ser-1216. Disordered stretches follow at residues Thr-1362–Asp-1381 and Glu-1403–Glu-1442. The PHD-type 3 zinc finger occupies Met-1444–Ser-1497.

This sequence belongs to the JARID1 histone demethylase family. Fe(2+) serves as cofactor.

It is found in the nucleus. It catalyses the reaction N(6),N(6),N(6)-trimethyl-L-lysyl(4)-[histone H3] + 3 2-oxoglutarate + 3 O2 = L-lysyl(4)-[histone H3] + 3 formaldehyde + 3 succinate + 3 CO2. Functionally, histone demethylase that demethylates 'Lys-4' of histone H3, thereby playing a central role in histone code. Does not demethylate histone H3 'Lys-9' or H3 'Lys-27'. Demethylates trimethylated, dimethylated and monomethylated H3 'Lys-4'. Acts as a transcriptional corepressor. The sequence is that of Lysine-specific demethylase 5B-B (kdm5bb) from Danio rerio (Zebrafish).